The primary structure comprises 633 residues: DNA mismatch repair protein MutL (633 aa).

Disordered stretches follow at residues 337-364 (RPDD…GEFG) and 383-405 (VGWS…TRPE). Positions 385–396 (WSGGSSASGGSS) are enriched in gly residues.

The protein belongs to the DNA mismatch repair MutL/HexB family.

This protein is involved in the repair of mismatches in DNA. It is required for dam-dependent methyl-directed DNA mismatch repair. May act as a 'molecular matchmaker', a protein that promotes the formation of a stable complex between two or more DNA-binding proteins in an ATP-dependent manner without itself being part of a final effector complex. The polypeptide is DNA mismatch repair protein MutL (Pseudomonas aeruginosa (strain LESB58)).